The sequence spans 422 residues: G2/mitotic-specific cyclin-A (422 aa).

The segment at 1-29 is disordered; it reads MSQPFALHHDGENQMQRRGKMNTRSNGLS.

This sequence belongs to the cyclin family. Cyclin AB subfamily.

In terms of biological role, essential for the control of the cell cycle at the G2/M (mitosis) transition. Interacts with the CDC2 and CDK2 protein kinases to form MPF. G2/M cyclins accumulate steadily during G2 and are abruptly destroyed at mitosis. The polypeptide is G2/mitotic-specific cyclin-A (Spisula solidissima (Atlantic surf-clam)).